A 679-amino-acid polypeptide reads, in one-letter code: UvrABC system protein B (679 aa).

Residues 25–412 form the Helicase ATP-binding domain; sequence QGVNSGEEFQ…EGKFIEQVIR (388 aa). 38–45 is an ATP binding site; the sequence is GATGTGKT. A Beta-hairpin motif is present at residues 91–114; sequence YYDYYQPEAYVPVSDTYIAKTASI. The Helicase C-terminal domain maps to 429–583; that stretch reads QIDDLLSEIR…KKYNQINGIT (155 aa). Positions 639-674 constitute a UVR domain; it reads PSLIDKLENKMKDAAKELNFEEAANLRDRIKKLRQK.

Belongs to the UvrB family. In terms of assembly, forms a heterotetramer with UvrA during the search for lesions. Interacts with UvrC in an incision complex.

It is found in the cytoplasm. Functionally, the UvrABC repair system catalyzes the recognition and processing of DNA lesions. A damage recognition complex composed of 2 UvrA and 2 UvrB subunits scans DNA for abnormalities. Upon binding of the UvrA(2)B(2) complex to a putative damaged site, the DNA wraps around one UvrB monomer. DNA wrap is dependent on ATP binding by UvrB and probably causes local melting of the DNA helix, facilitating insertion of UvrB beta-hairpin between the DNA strands. Then UvrB probes one DNA strand for the presence of a lesion. If a lesion is found the UvrA subunits dissociate and the UvrB-DNA preincision complex is formed. This complex is subsequently bound by UvrC and the second UvrB is released. If no lesion is found, the DNA wraps around the other UvrB subunit that will check the other stand for damage. This chain is UvrABC system protein B, found in Prochlorococcus marinus subsp. pastoris (strain CCMP1986 / NIES-2087 / MED4).